The primary structure comprises 462 residues: tRNA modification GTPase MnmE (462 aa).

Arg-22, Glu-87, and Arg-126 together coordinate (6S)-5-formyl-5,6,7,8-tetrahydrofolate. Residues 220-382 form the TrmE-type G domain; sequence GLKVAIVGRP…LARKVQEIVL (163 aa). Residue Asn-230 participates in K(+) binding. Residues 230-235, 249-255, and 274-277 contribute to the GTP site; these read NVGKSS, SNIPGTT, and DTAG. Ser-234 lines the Mg(2+) pocket. K(+)-binding residues include Ser-249, Ile-251, and Thr-254. Thr-255 contributes to the Mg(2+) binding site. Lys-462 lines the (6S)-5-formyl-5,6,7,8-tetrahydrofolate pocket.

Belongs to the TRAFAC class TrmE-Era-EngA-EngB-Septin-like GTPase superfamily. TrmE GTPase family. As to quaternary structure, homodimer. Heterotetramer of two MnmE and two MnmG subunits. Requires K(+) as cofactor.

It localises to the cytoplasm. In terms of biological role, exhibits a very high intrinsic GTPase hydrolysis rate. Involved in the addition of a carboxymethylaminomethyl (cmnm) group at the wobble position (U34) of certain tRNAs, forming tRNA-cmnm(5)s(2)U34. This is tRNA modification GTPase MnmE from Moorella thermoacetica (strain ATCC 39073 / JCM 9320).